We begin with the raw amino-acid sequence, 534 residues long: High-affinity nicotinic acid transporter (534 aa).

The Extracellular portion of the chain corresponds to 1-130 (MSNKFTMESP…DIHLVGTQYN (130 aa)). Positions 21 to 56 (SPTNDGSEEKPTEVTFQEDEGHDASLHNRSHDKKSE) are disordered. Phosphoserine is present on Ser-27. The chain crosses the membrane as a helical span at residues 131 to 151 (TCVTVFFATYVLFDPIGTNLL). Lys-152 is a topological domain (cytoplasmic). A helical membrane pass occupies residues 153–173 (IMGPPLMMSICLTCFGAISLG). Residues 174–187 (TAWVKNYAQLIVVR) lie on the Extracellular side of the membrane. A helical transmembrane segment spans residues 188-208 (LLLGAFEGMIYPAINMYLSVC). Topologically, residues 209–217 (YRREQYALR) are cytoplasmic. Residues 218–238 (FAFVFSAACLSSSFGGLIAYG) form a helical membrane-spanning segment. The Extracellular portion of the chain corresponds to 239 to 250 (CSKISGSLKDWQ). A helical transmembrane segment spans residues 251 to 271 (YIYIVEGCISLGFVPFYAFGL). The Cytoplasmic segment spans residues 272 to 323 (SKNLEDSWFFNKEEKEYISERYKTMNTFDPDEKFEWFQVWQAVKDVKTWASA). Lys-283 participates in a covalent cross-link: Glycyl lysine isopeptide (Lys-Gly) (interchain with G-Cter in ubiquitin). The helical transmembrane segment at 324–344 (VALFGIDLTTFGLTVFLPIII) threads the bilayer. The Extracellular portion of the chain corresponds to 345–355 (TSMGFTNVRAQ). The chain crosses the membrane as a helical span at residues 356–376 (LMTVPIYFLTAIVFFICAVWS). The Cytoplasmic portion of the chain corresponds to 377 to 384 (DRIKLRSP). Residues 385–405 (FILGACLTTSIGIAIVLGSQV) traverse the membrane as a helical segment. The Extracellular portion of the chain corresponds to 406 to 410 (HGVRY). The chain crosses the membrane as a helical span at residues 411–431 (FGVYILCMGIYVNAACNCLWL). Topologically, residues 432 to 444 (SGNTGNYFKRATA) are cytoplasmic. The helical transmembrane segment at 445–465 (LGINLFFGSGSGLVSGQIFVA) threads the bilayer. The Extracellular portion of the chain corresponds to 466-474 (KDKPRYIKG). The chain crosses the membrane as a helical span at residues 475–495 (LSISLAFQVFSIFMTVVQIFL). The Cytoplasmic segment spans residues 496–534 (YKRENDKKKAIIDRCNELGEPIPYDERLSDKNPEFKYMY).

This sequence belongs to the major facilitator superfamily. Allantoate permease family.

Its subcellular location is the membrane. Its function is as follows. Involved in the uptake of nicotinic acid. This is High-affinity nicotinic acid transporter (TNA1) from Saccharomyces cerevisiae (strain ATCC 204508 / S288c) (Baker's yeast).